Here is a 279-residue protein sequence, read N- to C-terminus: Very long chain fatty acid elongase 2 (279 aa).

7 consecutive transmembrane segments (helical) span residues 12–32 (WFLLDSYLPTFTLTIVYLLSI), 50–70 (ILTLYNLGITLLSAYMLVELV), 98–118 (VLWWYYFSKLVEFLDTIFFVL), 136–156 (MFNIWWCVLNWIPCGQSFFGP), 158–178 (LNSFIHILMYSYYGLSVFPSM), 188–208 (LTQAQLVQFVLTITHTLSAVV), and 213–233 (FPFGCLIFQSSYMMTLVILFL). The Di-lysine motif motif lies at 276-279 (KKVQ).

The protein belongs to the ELO family. ELOVL2 subfamily. In terms of assembly, interacts with TECR.

The protein resides in the endoplasmic reticulum membrane. It carries out the reaction a very-long-chain acyl-CoA + malonyl-CoA + H(+) = a very-long-chain 3-oxoacyl-CoA + CO2 + CoA. It catalyses the reaction (7Z,10Z,13Z,16Z,19Z)-docosapentaenoyl-CoA + malonyl-CoA + H(+) = (9Z,12Z,15Z,18Z,21Z)-3-oxotetracosapentaenoyl-CoA + CO2 + CoA. The enzyme catalyses (5Z,8Z,11Z,14Z,17Z)-eicosapentaenoyl-CoA + malonyl-CoA + H(+) = 3-oxo-(7Z,10Z,13Z,16Z,19Z)-docosapentaenoyl-CoA + CO2 + CoA. The catalysed reaction is (5Z,8Z,11Z,14Z)-eicosatetraenoyl-CoA + malonyl-CoA + H(+) = (7Z,10Z,13Z,16Z)-3-oxodocosatetraenoyl-CoA + CO2 + CoA. It carries out the reaction (7Z,10Z,13Z,16Z)-docosatetraenoyl-CoA + malonyl-CoA + H(+) = (9Z,12Z,15Z,18Z)-3-oxotetracosatetraenoyl-CoA + CO2 + CoA. It functions in the pathway lipid metabolism; polyunsaturated fatty acid biosynthesis. Functionally, catalyzes the first and rate-limiting reaction of the four reactions that constitute the long-chain fatty acids elongation cycle. This endoplasmic reticulum-bound enzymatic process allows the addition of 2 carbons to the chain of long- and very long-chain fatty acids (VLCFAs) per cycle. Condensing enzyme that catalyzes the synthesis of polyunsaturated very long chain fatty acid (C20- and C22-PUFA), acting specifically toward polyunsaturated acyl-CoA with the higher activity toward C20:4(n-6) acyl-CoA. May participate in the production of polyunsaturated VLCFAs of different chain lengths that are involved in multiple biological processes as precursors of membrane lipids and lipid mediators. This Rattus norvegicus (Rat) protein is Very long chain fatty acid elongase 2.